The following is a 119-amino-acid chain: Large ribosomal subunit protein bL19 (119 aa).

It belongs to the bacterial ribosomal protein bL19 family.

Its function is as follows. This protein is located at the 30S-50S ribosomal subunit interface and may play a role in the structure and function of the aminoacyl-tRNA binding site. This is Large ribosomal subunit protein bL19 from Pseudoalteromonas translucida (strain TAC 125).